A 365-amino-acid polypeptide reads, in one-letter code: PHD finger protein 6 (365 aa).

At Ser-2 the chain carries N-acetylserine. 2 short sequence motifs (nuclear localization signal) span residues 13-16 and 129-133; these read RQRK and RKHKK. The C2HC pre-PHD-type 1 zinc-finger motif lies at 14–52; the sequence is QRKCGFCKSNRDKECGQLLISENQKVAAHHKCMLFSSAL. The interval 14–132 is extended PHD1 domain (ePHD1); that stretch reads QRKCGFCKSN…IYMVYCRKHK (119 aa). The segment at 80–132 adopts a PHD-type 1 zinc-finger fold; the sequence is LMCSLCHCPGATIGCDVKTCHRTYHYHCALHDKAQIREKPSQGIYMVYCRKHK. Ser-138, Ser-145, and Ser-155 each carry phosphoserine. The interval 139–211 is disordered; the sequence is EADLEESFNE…RSSPSDTRPK (73 aa). The short motif at 157 to 169 is the Nucleolar localization signal element; sequence KSKKKSRKGRPRK. Basic residues predominate over residues 157 to 171; that stretch reads KSKKKSRKGRPRKTN. Residue Lys-173 forms a Glycyl lysine isopeptide (Lys-Gly) (interchain with G-Cter in SUMO2) linkage. Phosphoserine is present on residues Ser-183 and Ser-199. The C2HC pre-PHD-type 2 zinc-finger motif lies at 209–249; it reads RPKCGFCHVGEEENQARGKLHIFNAKKAAAHYKCMLFSSGT. The segment at 209–330 is extended PHD2 domain (ePHD2); that stretch reads RPKCGFCHVG…IYKLYCKNHS (122 aa). Lys-227 is covalently cross-linked (Glycyl lysine isopeptide (Lys-Gly) (interchain with G-Cter in SUMO2)). The PHD-type 2 zinc finger occupies 278–330; the sequence is MKCTLCSQPGATIGCEIKACVKTYHYHCGVQDKAKYIENMSRGIYKLYCKNHS. Residues 330-365 are disordered; sequence SGNDERDEEDEERESKSRGKVEIDQQQLTQQQLNGN. Positions 342-352 are enriched in basic and acidic residues; that stretch reads RESKSRGKVEI. The span at 354–365 shows a compositional bias: low complexity; it reads QQQLTQQQLNGN. The residue at position 358 (Thr-358) is a Phosphothreonine.

Interacts with UBTF. Interacts with the NuRD complex component RBBP4 (via the nucleolar localization motif), the interaction mediates transcriptional repression activity.

It localises to the nucleus. It is found in the nucleolus. The protein resides in the chromosome. The protein localises to the centromere. Its subcellular location is the kinetochore. Its function is as follows. Transcriptional regulator that associates with ribosomal RNA promoters and suppresses ribosomal RNA (rRNA) transcription. The polypeptide is PHD finger protein 6 (PHF6) (Bos taurus (Bovine)).